The chain runs to 546 residues: Probable T-complex protein 1 subunit theta (546 aa).

Residues 527–546 (MSKPAGGPKPPGPNPHWDDD) are disordered.

The protein belongs to the TCP-1 chaperonin family. As to quaternary structure, heterooligomeric complex of about 850 to 900 kDa that forms two stacked rings, 12 to 16 nm in diameter.

Its subcellular location is the cytoplasm. In terms of biological role, molecular chaperone; assists the folding of proteins upon ATP hydrolysis. Known to play a role, in vitro, in the folding of actin and tubulin. The polypeptide is Probable T-complex protein 1 subunit theta (cct8) (Schizosaccharomyces pombe (strain 972 / ATCC 24843) (Fission yeast)).